A 131-amino-acid polypeptide reads, in one-letter code: Holo-[acyl-carrier-protein] synthase (131 aa).

Mg(2+)-binding residues include Asp-8 and Glu-57.

It belongs to the P-Pant transferase superfamily. AcpS family. Requires Mg(2+) as cofactor.

Its subcellular location is the cytoplasm. It carries out the reaction apo-[ACP] + CoA = holo-[ACP] + adenosine 3',5'-bisphosphate + H(+). Its function is as follows. Transfers the 4'-phosphopantetheine moiety from coenzyme A to a Ser of acyl-carrier-protein. This Thiobacillus denitrificans (strain ATCC 25259 / T1) protein is Holo-[acyl-carrier-protein] synthase.